Here is a 305-residue protein sequence, read N- to C-terminus: N-acetylneuraminate lyase A (305 aa).

Aceneuramate is bound by residues T51 and T52. Y143 serves as the catalytic Proton donor. Residue K173 is the Schiff-base intermediate with substrate of the active site. Aceneuramate-binding residues include S175, G197, D199, E200, and S216.

This sequence belongs to the DapA family. NanA subfamily. As to quaternary structure, homotetramer.

It localises to the cytoplasm. It catalyses the reaction aceneuramate = aldehydo-N-acetyl-D-mannosamine + pyruvate. It participates in amino-sugar metabolism; N-acetylneuraminate degradation. Its function is as follows. Catalyzes the cleavage of N-acetylneuraminic acid (sialic acid) to form pyruvate and N-acetylmannosamine via a Schiff base intermediate. It prevents sialic acids from being recycled and returning to the cell surface. Involved in the N-glycolylneuraminic acid (Neu5Gc) degradation pathway. This Xenopus laevis (African clawed frog) protein is N-acetylneuraminate lyase A (npl-a).